Here is a 530-residue protein sequence, read N- to C-terminus: G2/mitotic-specific cyclin-B (530 aa).

The tract at residues Ala-76–Asn-152 is disordered. Residues Pro-121 to Pro-144 are compositionally biased toward low complexity. The residue at position 137 (Ser-137) is a Phosphoserine.

This sequence belongs to the cyclin family. Cyclin AB subfamily. As to quaternary structure, interacts with the protein kinase Cdk1 to form a serine/threonine kinase holoenzyme complex also known as maturation promoting factor (MPF). The cyclin subunit imparts substrate specificity to the complex.

Its function is as follows. Essential for the control of the cell cycle at the G2/M (mitosis) transition. In Drosophila melanogaster (Fruit fly), this protein is G2/mitotic-specific cyclin-B (CycB).